We begin with the raw amino-acid sequence, 529 residues long: Lysine--tRNA ligase (529 aa).

Residues 44–52 (PSGLPHIGT) carry the 'HIGH' region motif. The 'KMSKS' region signature appears at 290–294 (KISKS). An ATP-binding site is contributed by Lys293.

The protein belongs to the class-I aminoacyl-tRNA synthetase family.

It is found in the cytoplasm. It catalyses the reaction tRNA(Lys) + L-lysine + ATP = L-lysyl-tRNA(Lys) + AMP + diphosphate. This Rickettsia akari (strain Hartford) protein is Lysine--tRNA ligase.